We begin with the raw amino-acid sequence, 174 residues long: Crossover junction endodeoxyribonuclease RuvC (174 aa).

Residues Asp-8, Glu-67, and Asp-139 contribute to the active site. 3 residues coordinate Mg(2+): Asp-8, Glu-67, and Asp-139.

Belongs to the RuvC family. In terms of assembly, homodimer which binds Holliday junction (HJ) DNA. The HJ becomes 2-fold symmetrical on binding to RuvC with unstacked arms; it has a different conformation from HJ DNA in complex with RuvA. In the full resolvosome a probable DNA-RuvA(4)-RuvB(12)-RuvC(2) complex forms which resolves the HJ. It depends on Mg(2+) as a cofactor.

It localises to the cytoplasm. It carries out the reaction Endonucleolytic cleavage at a junction such as a reciprocal single-stranded crossover between two homologous DNA duplexes (Holliday junction).. Functionally, the RuvA-RuvB-RuvC complex processes Holliday junction (HJ) DNA during genetic recombination and DNA repair. Endonuclease that resolves HJ intermediates. Cleaves cruciform DNA by making single-stranded nicks across the HJ at symmetrical positions within the homologous arms, yielding a 5'-phosphate and a 3'-hydroxyl group; requires a central core of homology in the junction. The consensus cleavage sequence is 5'-(A/T)TT(C/G)-3'. Cleavage occurs on the 3'-side of the TT dinucleotide at the point of strand exchange. HJ branch migration catalyzed by RuvA-RuvB allows RuvC to scan DNA until it finds its consensus sequence, where it cleaves and resolves the cruciform DNA. The polypeptide is Crossover junction endodeoxyribonuclease RuvC (Stutzerimonas stutzeri (strain A1501) (Pseudomonas stutzeri)).